Reading from the N-terminus, the 235-residue chain is Phosphoribosylaminoimidazole-succinocarboxamide synthase (235 aa).

Belongs to the SAICAR synthetase family.

The catalysed reaction is 5-amino-1-(5-phospho-D-ribosyl)imidazole-4-carboxylate + L-aspartate + ATP = (2S)-2-[5-amino-1-(5-phospho-beta-D-ribosyl)imidazole-4-carboxamido]succinate + ADP + phosphate + 2 H(+). It functions in the pathway purine metabolism; IMP biosynthesis via de novo pathway; 5-amino-1-(5-phospho-D-ribosyl)imidazole-4-carboxamide from 5-amino-1-(5-phospho-D-ribosyl)imidazole-4-carboxylate: step 1/2. The polypeptide is Phosphoribosylaminoimidazole-succinocarboxamide synthase (Caldanaerobacter subterraneus subsp. tengcongensis (strain DSM 15242 / JCM 11007 / NBRC 100824 / MB4) (Thermoanaerobacter tengcongensis)).